We begin with the raw amino-acid sequence, 163 residues long: Large ribosomal subunit protein uL10 (163 aa).

Belongs to the universal ribosomal protein uL10 family. Part of the ribosomal stalk of the 50S ribosomal subunit. The N-terminus interacts with L11 and the large rRNA to form the base of the stalk. The C-terminus forms an elongated spine to which L12 dimers bind in a sequential fashion forming a multimeric L10(L12)X complex.

Forms part of the ribosomal stalk, playing a central role in the interaction of the ribosome with GTP-bound translation factors. This Actinobacillus succinogenes (strain ATCC 55618 / DSM 22257 / CCUG 43843 / 130Z) protein is Large ribosomal subunit protein uL10.